The following is a 445-amino-acid chain: Tubby-like F-box protein 8 (445 aa).

Residues E56 to K102 form the F-box domain.

It belongs to the TUB family. As to expression, ubiquitous.

In Oryza sativa subsp. japonica (Rice), this protein is Tubby-like F-box protein 8 (TULP8).